The chain runs to 909 residues: Epithelial discoidin domain-containing receptor 1 (909 aa).

The first 18 residues, 1–18 (MGPEALSSLLLLLLVASG), serve as a signal peptide directing secretion. The Extracellular portion of the chain corresponds to 21–413 (DMKGHFDPAK…VAKAEGSPTA (393 aa)). Positions 31–181 (CRYALGMQDR…VCLRVELYGC (151 aa)) constitute an F5/8 type C domain. Disulfide bonds link cysteine 31–cysteine 181 and cysteine 70–cysteine 173. Residues 45-60 (SDISASSSWSDSTAAR) are compositionally biased toward low complexity. The disordered stretch occupies residues 45–65 (SDISASSSWSDSTAARHSSDG). The DS-like domain stretch occupies residues 188–363 (LSYTAPVGQT…LFSEISFISD (176 aa)). Ca(2+) is bound by residues asparagine 207, glutamine 226, aspartate 229, valine 231, tyrosine 249, and tyrosine 251. Asparagine 207 is a glycosylation site (N-linked (GlcNAc...) asparagine). Asparagine 256 carries an N-linked (GlcNAc...) asparagine glycan. A disulfide bridge connects residues cysteine 299 and cysteine 344. Residues serine 356 and glutamate 357 each coordinate Ca(2+). Residues asparagine 366 and asparagine 390 are each glycosylated (N-linked (GlcNAc...) asparagine). The helical transmembrane segment at 414-434 (ILIGCLVAIILLLLLIIALML) threads the bilayer. At 435–909 (WRLHWRRLLS…FLAEDALNTV (475 aa)) the chain is on the cytoplasmic side. The tract at residues 466–495 (ILINNRPGPREPPPYQEPRPRGNPPHSAPC) is disordered. Residues 475 to 492 (REPPPYQEPRPRGNPPHS) are compositionally biased toward pro residues. The short motif at 477–480 (PPPY) is the PPxY motif element. A phosphotyrosine; by autocatalysis mark is found at tyrosine 480, tyrosine 509, and tyrosine 516. Positions 606–901 (LRFKEKLGEG…PPFSQLHRFL (296 aa)) constitute a Protein kinase domain. ATP is bound at residue 612-620 (LGEGQFGEV). Serine 627 bears the Phosphoserine mark. Lysine 651 contacts ATP. Phosphotyrosine; by autocatalysis is present on tyrosine 736. Aspartate 762 serves as the catalytic Proton acceptor. Phosphotyrosine; by autocatalysis is present on residues tyrosine 788, tyrosine 792, and tyrosine 793.

Belongs to the protein kinase superfamily. Tyr protein kinase family. Insulin receptor subfamily. Homodimer. Interacts (via PPxY motif) with WWC1 (via WW domains) in a collagen-regulated manner. Forms a tripartite complex with WWC1 and PRKCZ, but predominantly in the absence of collagen. Interacts (tyrosine phosphorylated) with SHC1. Interacts with SRC. Interacts with MYH9. Interacts with CDH1. Interacts with PTPN11. Interacts with NCK2. Post-translationally, autophosphorylated in response to fibrillar collagen binding.

It is found in the cell membrane. It catalyses the reaction L-tyrosyl-[protein] + ATP = O-phospho-L-tyrosyl-[protein] + ADP + H(+). Tyrosine kinase that functions as a cell surface receptor for fibrillar collagen and regulates cell attachment to the extracellular matrix, remodeling of the extracellular matrix, cell migration, differentiation, survival and cell proliferation. Collagen binding triggers a signaling pathway that involves SRC and leads to the activation of MAP kinases. Regulates remodeling of the extracellular matrix by up-regulation of the matrix metalloproteinases MMP2, MMP7 and MMP9, and thereby facilitates cell migration and wound healing. Promotes smooth muscle cell migration, and thereby contributes to arterial wound healing. Also plays a role in tumor cell invasion. Phosphorylates PTPN11. Required for normal blastocyst implantation during pregnancy, for normal mammary gland differentiation and normal lactation. Required for normal ear morphology and normal hearing. The polypeptide is Epithelial discoidin domain-containing receptor 1 (DDR1) (Pan troglodytes (Chimpanzee)).